A 386-amino-acid polypeptide reads, in one-letter code: RNA polymerase sigma factor SigA (386 aa).

A sigma-70 factor domain-2 region spans residues 154–224 (LAEANLRLVV…TRAIADQART (71 aa)). An Interaction with polymerase core subunit RpoC motif is present at residues 178–181 (DLIQ). The tract at residues 233 to 309 (ETINKLIRVQ…DDVIESPVDY (77 aa)) is sigma-70 factor domain-3. The segment at 322-375 (VMDTLTDREENVLRMRFGLDDGRMHTLEDVGKQFKVTRERIRQIEAKAIKKLRH) is sigma-70 factor domain-4. Positions 348 to 367 (LEDVGKQFKVTRERIRQIEA) form a DNA-binding region, H-T-H motif.

The protein belongs to the sigma-70 factor family. RpoD/SigA subfamily. Interacts transiently with the RNA polymerase catalytic core.

It localises to the cytoplasm. In terms of biological role, sigma factors are initiation factors that promote the attachment of RNA polymerase to specific initiation sites and are then released. This sigma factor is the primary sigma factor during exponential growth. The chain is RNA polymerase sigma factor SigA from Lactococcus lactis subsp. lactis (strain IL1403) (Streptococcus lactis).